Reading from the N-terminus, the 376-residue chain is Queuine tRNA-ribosyltransferase accessory subunit 2 (376 aa).

Residues C323, C325, C328, and H354 each coordinate Zn(2+).

The protein belongs to the queuine tRNA-ribosyltransferase family. QTRT2 subfamily. Heterodimer of a catalytic subunit and an accessory subunit. Requires Zn(2+) as cofactor.

It is found in the cytoplasm. In terms of biological role, non-catalytic subunit of the queuine tRNA-ribosyltransferase (TGT) that catalyzes the base-exchange of a guanine (G) residue with queuine (Q) at position 34 (anticodon wobble position) in tRNAs with GU(N) anticodons (tRNA-Asp, -Asn, -His and -Tyr), resulting in the hypermodified nucleoside queuosine (7-(((4,5-cis-dihydroxy-2-cyclopenten-1-yl)amino)methyl)-7-deazaguanosine). The protein is Queuine tRNA-ribosyltransferase accessory subunit 2 of Caenorhabditis briggsae.